Consider the following 56-residue polypeptide: Ovomucoid (56 aa).

The Kazal-like domain maps to 6-56 (VDCSEYPKPDCTTEERPLCGSDNKTYGNKCNFCNAVVESNGTLTLSHFGKC). 3 disulfides stabilise this stretch: Cys8–Cys38, Cys16–Cys35, and Cys24–Cys56. Asn45 is a glycosylation site (N-linked (GlcNAc...) asparagine).

The protein resides in the secreted. The polypeptide is Ovomucoid (Francolinus pondicerianus (Grey francolin)).